A 362-amino-acid polypeptide reads, in one-letter code: Large ribosomal subunit protein uL2m (362 aa).

Residues 1 to 23 (MLSYNRFRGYLIPQIHALKLFRY) constitute a mitochondrion transit peptide. Residues 306–362 (AMNPCDHPHGGGGGKSIGNKPSQSPWGVLAKGGYKTRRGKNVNKLLVRDRPRGKEKR) are disordered. A compositionally biased stretch (basic and acidic residues) spans 351-362 (LVRDRPRGKEKR).

It belongs to the universal ribosomal protein uL2 family. In terms of assembly, component of the mitochondrial large ribosomal subunit (mt-LSU). Mature yeast 74S mitochondrial ribosomes consist of a small (37S) and a large (54S) subunit. The 37S small subunit contains a 15S ribosomal RNA (15S mt-rRNA) and at least 32 different proteins. The 54S large subunit contains a 21S rRNA (21S mt-rRNA) and at least 45 different proteins. uL2m has a Na/K ligand binding site.

The protein localises to the mitochondrion. In terms of biological role, component of the mitochondrial ribosome (mitoribosome), a dedicated translation machinery responsible for the synthesis of mitochondrial genome-encoded proteins, including at least some of the essential transmembrane subunits of the mitochondrial respiratory chain. The mitoribosomes are attached to the mitochondrial inner membrane and translation products are cotranslationally integrated into the membrane. In Schizosaccharomyces pombe (strain 972 / ATCC 24843) (Fission yeast), this protein is Large ribosomal subunit protein uL2m (rml2).